The chain runs to 305 residues: Glycine--tRNA ligase alpha subunit (305 aa).

It belongs to the class-II aminoacyl-tRNA synthetase family. As to quaternary structure, tetramer of two alpha and two beta subunits.

Its subcellular location is the cytoplasm. The enzyme catalyses tRNA(Gly) + glycine + ATP = glycyl-tRNA(Gly) + AMP + diphosphate. This Streptococcus pneumoniae (strain Hungary19A-6) protein is Glycine--tRNA ligase alpha subunit.